A 946-amino-acid polypeptide reads, in one-letter code: Histone-lysine N-methyltransferase, H3 lysine-79 specific (946 aa).

Over residues M1–E18 the composition is skewed to basic and acidic residues. Residues M1–E28 form a disordered region. The DOT1 domain occupies Q54 to R369. Residues Y173–T176, F196–Q205, E223, and D259–F260 contribute to the S-adenosyl-L-methionine site. Basic and acidic residues predominate over residues Q368–K409. 2 disordered regions span residues Q368–G577 and P849–E905. Positions T410–K422 are enriched in polar residues. A compositionally biased stretch (basic and acidic residues) spans G464–V484. 3 stretches are compositionally biased toward low complexity: residues K491–P502, N512–A528, and S855–S864. Residues G880–A903 are compositionally biased toward gly residues.

This sequence belongs to the class I-like SAM-binding methyltransferase superfamily. DOT1 family. As to quaternary structure, interacts with zfp-1 (via C-terminus) to form a heterodimer known as the zfp-1-dot-1.1 complex or DotCom complex.

It is found in the nucleus. It localises to the chromosome. The enzyme catalyses L-lysyl(79)-[histone H3] + 3 S-adenosyl-L-methionine = N(6),N(6),N(6)-trimethyl-L-lysyl(79)-[histone H3] + 3 S-adenosyl-L-homocysteine + 3 H(+). Functionally, histone methyltransferase, which in complex with zfp-1, methylates 'Lys-79' of histone H3 to activate transcription. During stress, the zfp-1-dot-1.1 complex also plays a role in the deubiquitination of histone H2B sites, which negatively modulates the RNA polymerase II-induced transcription of highly expressed genes. Involved in controlling tissue-specific gene expression, particularly in the epidermis. This Caenorhabditis elegans protein is Histone-lysine N-methyltransferase, H3 lysine-79 specific.